The following is a 230-amino-acid chain: 2-C-methyl-D-erythritol 4-phosphate cytidylyltransferase (230 aa).

It belongs to the IspD/TarI cytidylyltransferase family. IspD subfamily.

It catalyses the reaction 2-C-methyl-D-erythritol 4-phosphate + CTP + H(+) = 4-CDP-2-C-methyl-D-erythritol + diphosphate. Its pathway is isoprenoid biosynthesis; isopentenyl diphosphate biosynthesis via DXP pathway; isopentenyl diphosphate from 1-deoxy-D-xylulose 5-phosphate: step 2/6. Functionally, catalyzes the formation of 4-diphosphocytidyl-2-C-methyl-D-erythritol from CTP and 2-C-methyl-D-erythritol 4-phosphate (MEP). The protein is 2-C-methyl-D-erythritol 4-phosphate cytidylyltransferase of Synechocystis sp. (strain ATCC 27184 / PCC 6803 / Kazusa).